The sequence spans 557 residues: 6-phosphofructo-2-kinase/fructose-2,6-bisphosphatase 2 (557 aa).

The segment covering 1 to 16 (MSENSTFSTEDSSSSS) has biased composition (low complexity). The segment at 1-21 (MSENSTFSTEDSSSSSYKPHA) is disordered. N-acetylserine is present on S2. Residues 2–251 (SENSTFSTED…VYYLMNIHVH (250 aa)) are 6-phosphofructo-2-kinase. S32 is modified (phosphoserine; by PKA). Residue 48 to 56 (GLPARGKTY) participates in ATP binding. Residues R81 and R105 each contribute to the beta-D-fructose 6-phosphate site. The active site involves D131. T133 and R139 together coordinate beta-D-fructose 6-phosphate. C161 is an active-site residue. 170–175 (NILEVK) contacts ATP. Beta-D-fructose 6-phosphate is bound by residues K175, R196, and Y200. The segment at 252–557 (PRTIYLCRHG…PSMASLTLLS (306 aa)) is fructose-2,6-bisphosphatase. R259 is a binding site for beta-D-fructose 2,6-bisphosphate. The active-site Tele-phosphohistidine intermediate is H260. 2 residues coordinate beta-D-fructose 2,6-bisphosphate: N266 and G272. Catalysis depends on E329, which acts as the Proton donor/acceptor. The beta-D-fructose 2,6-bisphosphate site is built by Y340, R354, K358, Y369, Q395, and R399. Position 351 to 354 (351 to 354 (FALR)) interacts with ATP. Residues 395–399 (QAVMR) and Y431 contribute to the ATP site. Residues 449 to 495 (RDKPTHNFPKSQTPVRMRRNSFTPLSSSNTIRRPRNYSVGSRPLKPL) form a disordered region. The span at 456–479 (FPKSQTPVRMRRNSFTPLSSSNTI) shows a compositional bias: polar residues. Phosphoserine is present on S469. T471 is modified (phosphothreonine). T478 carries the phosphothreonine; by PKC modification. S486 and S496 each carry phosphoserine.

In the C-terminal section; belongs to the phosphoglycerate mutase family. In terms of assembly, homodimer. Forms a heterodimer with PFKFB3. In terms of processing, phosphorylation by AMPK stimulates activity.

The enzyme catalyses beta-D-fructose 2,6-bisphosphate + H2O = beta-D-fructose 6-phosphate + phosphate. The catalysed reaction is beta-D-fructose 6-phosphate + ATP = beta-D-fructose 2,6-bisphosphate + ADP + H(+). Phosphorylation results in the activation of the kinase activity. In terms of biological role, synthesis and degradation of fructose 2,6-bisphosphate. The chain is 6-phosphofructo-2-kinase/fructose-2,6-bisphosphatase 2 (Pfkfb2) from Rattus norvegicus (Rat).